We begin with the raw amino-acid sequence, 467 residues long: Dynactin subunit 4 (467 aa).

At alanine 2 the chain carries N-acetylalanine. A Glycyl lysine isopeptide (Lys-Gly) (interchain with G-Cter in SUMO2) cross-link involves residue lysine 222. Threonine 414 bears the Phosphothreonine mark.

It belongs to the dynactin subunit 4 family. Subunit of dynactin, a multiprotein complex part of a tripartite complex with dynein and a adapter, such as BICDL1, BICD2 or HOOK3. The dynactin complex is built around ACTR1A/ACTB filament and consists of an actin-related filament composed of a shoulder domain, a pointed end and a barbed end. Its length is defined by its flexible shoulder domain. The soulder is composed of 2 DCTN1 subunits, 4 DCTN2 and 2 DCTN3. The 4 DCNT2 (via N-terminus) bind the ACTR1A filament and act as molecular rulers to determine the length. The pointed end is important for binding dynein-dynactin cargo adapters. Consists of 4 subunits: ACTR10, DCNT4, DCTN5 and DCTN6. The barbed end is composed of a CAPZA1:CAPZB heterodimers, which binds ACTR1A/ACTB filament and dynactin and stabilizes dynactin. Interacts with ATP7B, but not ATP7A, in a copper-dependent manner. Interacts with ANK2; this interaction is required for localization at costameres. Interacts with N4BP2L1.

The protein resides in the cytoplasm. Its subcellular location is the cytoskeleton. The protein localises to the microtubule organizing center. It is found in the centrosome. It localises to the stress fiber. The protein resides in the cell cortex. Its subcellular location is the myofibril. The protein localises to the sarcomere. In terms of biological role, part of the dynactin complex that activates the molecular motor dynein for ultra-processive transport along microtubules. Together with dynein is involved in spindle assembly and cytokinesis. In Sus scrofa (Pig), this protein is Dynactin subunit 4 (DCTN4).